The following is a 456-amino-acid chain: Cytochrome c biogenesis protein CcsB (456 aa).

The next 3 helical transmembrane spans lie at 29-49, 88-108, and 174-194; these read LRLA…GTVI, AGWF…CTFR, and VGPI…IWGS.

This sequence belongs to the Ccs1/CcsB family. May interact with CcsA.

The protein localises to the cellular thylakoid membrane. Required during biogenesis of c-type cytochromes (cytochrome c6 and cytochrome f) at the step of heme attachment. The sequence is that of Cytochrome c biogenesis protein CcsB from Synechococcus sp. (strain ATCC 27144 / PCC 6301 / SAUG 1402/1) (Anacystis nidulans).